The primary structure comprises 471 residues: Ubiquitin carboxyl-terminal hydrolase calypso (471 aa).

The UCH catalytic domain maps to 45–276 (GWLELESDPG…IRFNLMAVVP (232 aa)). Catalysis depends on cysteine 131, which acts as the Nucleophile. Histidine 213 functions as the Proton donor in the catalytic mechanism. Coiled coils occupy residues 240–256 (WEDS…VMAE) and 298–324 (GTLQ…DTPT). The disordered stretch occupies residues 307–326 (DEQGESGNGDSQRPDTPTTL). Residues 314-326 (NGDSQRPDTPTTL) are compositionally biased toward polar residues. The ULD domain maps to 375–403 (NYDKFICTFLSMLAHQGVLGELVSQHLLP). The positively charged C-terminal tail required for binding nucleosomes stretch occupies residues 405–471 (KKVSGQGAAN…KGRNKCRKRK (67 aa)). Positions 412-471 (AANRISKQSTTASAGGSTAAGTASTPKTQQQQAAAAKNGKSPSKTPGRRRKGRNKCRKRK) are disordered. Residues 420-447 (STTASAGGSTAAGTASTPKTQQQQAAAA) show a composition bias toward low complexity. Basic residues predominate over residues 457–471 (PGRRRKGRNKCRKRK).

The protein belongs to the peptidase C12 family. BAP1 subfamily. As to quaternary structure, catalytic component of the polycomb repressive deubiquitinase (PR-DUB) complex, at least composed of caly/calypso, Asx and sba (MBD5/6 homolog). The PR-DUB complex associates with nucleosomes to mediate deubiquitination of histone H2AK118ub1 substrates; the association requires the positively charged C-terminal tail of caly, probably due to direct binding of DNA. Interacts (via ULD domain) with Asx (via DEUBAD domain); the interaction produces a stable heterodimer with a composite binding site for ubiquitin. Homodimerizes (via coiled-coil hinge-region between the UCH and ULD domains) to mediate assembly of 2 copies of the caly-Asx heterodimer into a bisymmetric tetramer; dimerization enhances PR-DUB association with nucleosomes.

The protein localises to the nucleus. It carries out the reaction Thiol-dependent hydrolysis of ester, thioester, amide, peptide and isopeptide bonds formed by the C-terminal Gly of ubiquitin (a 76-residue protein attached to proteins as an intracellular targeting signal).. In terms of biological role, catalytic component of the polycomb repressive deubiquitinase (PR-DUB) complex, a complex that specifically mediates deubiquitination of histone H2A monoubiquitinated at 'Lys-119' (H2AK118ub1). Mediates bisymmetric organization of the PR-DUB complex and is involved in association with nucleosomes to mediate deubiquitination. Does not deubiquitinate monoubiquitinated histone H2B. Required to maintain the transcriptionally repressive state of homeotic genes throughout development. The PR-DUB complex has weak or no activity toward 'Lys-48'- and 'Lys-63'-linked polyubiquitin chains. Polycomb group (PcG) protein. In Drosophila melanogaster (Fruit fly), this protein is Ubiquitin carboxyl-terminal hydrolase calypso.